Here is a 622-residue protein sequence, read N- to C-terminus: UvrABC system protein C (622 aa).

The GIY-YIG domain maps to 13–92; it reads DKPGVYLMKN…IKENRPKYNV (80 aa). One can recognise a UVR domain in the interval 205 to 240; it reads DELIKKIEEKMKRAAEKMDFEGAAHYRDQRQALLDI.

This sequence belongs to the UvrC family. As to quaternary structure, interacts with UvrB in an incision complex.

The protein localises to the cytoplasm. In terms of biological role, the UvrABC repair system catalyzes the recognition and processing of DNA lesions. UvrC both incises the 5' and 3' sides of the lesion. The N-terminal half is responsible for the 3' incision and the C-terminal half is responsible for the 5' incision. In Alkaliphilus metalliredigens (strain QYMF), this protein is UvrABC system protein C.